We begin with the raw amino-acid sequence, 258 residues long: Regulatory protein RecX (258 aa).

Belongs to the RecX family.

It localises to the cytoplasm. Its function is as follows. Modulates RecA activity. This is Regulatory protein RecX from Streptococcus thermophilus (strain CNRZ 1066).